The following is a 175-amino-acid chain: Shikimate kinase (175 aa).

11-16 (GAGKTT) contacts ATP. Threonine 15 contributes to the Mg(2+) binding site. 3 residues coordinate substrate: aspartate 33, arginine 57, and glycine 79. Arginine 118 is a binding site for ATP. Substrate is bound at residue arginine 140.

It belongs to the shikimate kinase family. As to quaternary structure, monomer. Requires Mg(2+) as cofactor.

It is found in the cytoplasm. It catalyses the reaction shikimate + ATP = 3-phosphoshikimate + ADP + H(+). It functions in the pathway metabolic intermediate biosynthesis; chorismate biosynthesis; chorismate from D-erythrose 4-phosphate and phosphoenolpyruvate: step 5/7. In terms of biological role, catalyzes the specific phosphorylation of the 3-hydroxyl group of shikimic acid using ATP as a cosubstrate. This is Shikimate kinase from Phocaeicola vulgatus (strain ATCC 8482 / DSM 1447 / JCM 5826 / CCUG 4940 / NBRC 14291 / NCTC 11154) (Bacteroides vulgatus).